The sequence spans 60 residues: Large ribosomal subunit protein uL30 (60 aa).

Belongs to the universal ribosomal protein uL30 family. As to quaternary structure, part of the 50S ribosomal subunit.

The polypeptide is Large ribosomal subunit protein uL30 (Amoebophilus asiaticus (strain 5a2)).